Reading from the N-terminus, the 179-residue chain is MDEMLILVDADDNAIGSQSKTRVHQQGLLHRAFSIFIFDSQGRLLLQQRAFSKYHSAGLWTNSCCGHPRWGESTLAAAQRRLQEEMGFSAELQQVSSFTYQAAVPGDLIEHEFDHIYVGLFDGKPQGAPEEAHSWSWTDIQQLTDETTRNPEKFTVWFLTIMKDLGANEMERWARLAAS.

Residues histidine 24 and histidine 30 each coordinate Mn(2+). The Nudix hydrolase domain occupies 28 to 160; that stretch reads LLHRAFSIFI…PEKFTVWFLT (133 aa). Residue cysteine 65 is part of the active site. Histidine 67 serves as a coordination point for Mn(2+). Glutamate 85 lines the Mg(2+) pocket. The Mn(2+) site is built by glutamate 110 and glutamate 112. The active site involves glutamate 112.

It belongs to the IPP isomerase type 1 family. Homodimer. Requires Mg(2+) as cofactor. Mn(2+) is required as a cofactor.

The protein localises to the cytoplasm. The catalysed reaction is isopentenyl diphosphate = dimethylallyl diphosphate. It participates in isoprenoid biosynthesis; dimethylallyl diphosphate biosynthesis; dimethylallyl diphosphate from isopentenyl diphosphate: step 1/1. Its function is as follows. Catalyzes the 1,3-allylic rearrangement of the homoallylic substrate isopentenyl (IPP) to its highly electrophilic allylic isomer, dimethylallyl diphosphate (DMAPP). This is Isopentenyl-diphosphate Delta-isomerase from Serratia proteamaculans (strain 568).